The sequence spans 206 residues: Methyltransferase-like 26 (206 aa).

Belongs to the UPF0585 family.

The protein is Methyltransferase-like 26 of Danio rerio (Zebrafish).